Here is a 208-residue protein sequence, read N- to C-terminus: Protein Nef (208 aa).

A lipid anchor (N-myristoyl glycine; by host) is attached at glycine 2. Serine 6 is modified (phosphoserine; by host). The tract at residues glutamate 64–glutamate 67 is acidic; interacts with host PACS1 and PACS2; stabilizes the interaction of NEF/MHC-I with host AP1M1; necessary for MHC-I internalization. Positions proline 71 to proline 80 are SH3-binding; interaction with Src family tyrosine kinases. A PxxP; stabilizes the interaction of NEF/MHC-I with host AP1M1; necessary for MHC-I internalization motif is present at residues proline 74–proline 77. The segment at aspartate 110–tryptophan 126 is mediates dimerization, Nef-PTE1 interaction. Positions valine 150–valine 182 are binding to ATP6V1H. The short motif at leucine 166–leucine 167 is the Dileucine internalization motif; necessary for CD4 internalization element. The Diacidic; necessary for CD4 internalization signature appears at aspartate 176–aspartate 177.

Belongs to the lentivirus primate group Nef protein family. As to quaternary structure, monomer; cytosolic form. Homodimer; membrane bound form. Interacts with Nef associated p21-activated kinase (PAK2); this interaction activates PAK2. Associates with the Nef-MHC-I-AP1 complex; this complex is required for MHC-I internalization. Interacts (via C-terminus) with host PI3-kinase. Interacts with host PACS1; this interaction seems to be weak. Interacts with host PACS2. Interacts with host LCK and MAPK3; these interactions inhibit the kinase activity of the latter. Interacts with host ATP6V1H; this interaction may play a role in CD4 endocytosis. Associates with the CD4-Nef-AP2 complex; this complex is required for CD4 internalization. Interacts with host AP2 subunit alpha and AP2 subunit sigma2. Interacts with TCR-zeta chain; this interaction up-regulates the Fas ligand (FasL) surface expression. Interacts with host HCK, LYN, and SRC; these interactions activate the Src family kinases. Interacts with MAP3K5; this interaction inhibits the Fas and TNFR-mediated death signals. Interacts with beta-COP and PTE1. Interacts with human RACK1; this increases Nef phosphorylation by PKC. Interacts with TP53; this interaction decreases the half-life of TP53, protecting the infected cell against p53-mediated apoptosis. The virion-associated Nef proteins are cleaved by the viral protease to release the soluble C-terminal core protein. Nef is probably cleaved concomitantly with viral structural proteins on maturation of virus particles. Post-translationally, myristoylated. In terms of processing, phosphorylated on serine residues, probably by host PKCdelta and theta.

It localises to the host cell membrane. It is found in the virion. The protein resides in the secreted. Its subcellular location is the host Golgi apparatus membrane. Its function is as follows. Factor of infectivity and pathogenicity, required for optimal virus replication. Alters numerous pathways of T-lymphocyte function and down-regulates immunity surface molecules in order to evade host defense and increase viral infectivity. Alters the functionality of other immunity cells, like dendritic cells, monocytes/macrophages and NK cells. Functionally, in infected CD4(+) T-lymphocytes, down-regulates the surface MHC-I, mature MHC-II, CD4, CD28, CCR5 and CXCR4 molecules. Mediates internalization and degradation of host CD4 through the interaction of with the cytoplasmic tail of CD4, the recruitment of AP-2 (clathrin adapter protein complex 2), internalization through clathrin coated pits, and subsequent transport to endosomes and lysosomes for degradation. Diverts host MHC-I molecules to the trans-Golgi network-associated endosomal compartments by an endocytic pathway to finally target them for degradation. MHC-I down-regulation may involve AP-1 (clathrin adapter protein complex 1) or possibly Src family kinase-ZAP70/Syk-PI3K cascade recruited by PACS2. In consequence infected cells are masked for immune recognition by cytotoxic T-lymphocytes. Decreasing the number of immune receptors also prevents reinfection by more HIV particles (superinfection). Down-regulates host SERINC3 and SERINC5 thereby excluding these proteins from the viral particles. Virion infectivity is drastically higher when SERINC3 or SERINC5 are excluded from the viral envelope, because these host antiviral proteins impair the membrane fusion event necessary for subsequent virion penetration. In terms of biological role, bypasses host T-cell signaling by inducing a transcriptional program nearly identical to that of anti-CD3 cell activation. Interaction with TCR-zeta chain up-regulates the Fas ligand (FasL). Increasing surface FasL molecules and decreasing surface MHC-I molecules on infected CD4(+) cells send attacking cytotoxic CD8+ T-lymphocytes into apoptosis. Plays a role in optimizing the host cell environment for viral replication without causing cell death by apoptosis. Protects the infected cells from apoptosis in order to keep them alive until the next virus generation is ready to strike. Inhibits the Fas and TNFR-mediated death signals by blocking MAP3K5/ASK1. Decreases the half-life of TP53, protecting the infected cell against p53-mediated apoptosis. Inhibits the apoptotic signals regulated by the Bcl-2 family proteins through the formation of a Nef/PI3-kinase/PAK2 complex that leads to activation of PAK2 and induces phosphorylation of host BAD. Its function is as follows. Extracellular Nef protein targets CD4(+) T-lymphocytes for apoptosis by interacting with CXCR4 surface receptors. This is Protein Nef from Human immunodeficiency virus type 1 group M subtype B (isolate MN) (HIV-1).